Reading from the N-terminus, the 1202-residue chain is Adenine-specific methyltransferase PglX (1202 aa).

The protein belongs to the methyltransferase superfamily. PglX adenine methyltransferase family.

The enzyme catalyses a 2'-deoxyadenosine in DNA + S-adenosyl-L-methionine = an N(6)-methyl-2'-deoxyadenosine in DNA + S-adenosyl-L-homocysteine + H(+). Its function is as follows. BREX systems (bacteriophage exclusion) provide immunity against bacteriophage. Part of a type 1 BREX system which protects against dsDNA phage. This system allows phage adsorption but prevents phage DNA replication, without degradation of the phage DNA. Methylation of bacterial DNA by this protein guides self/non-self discrimination. In terms of biological role, probably methylates the adenine in the fifth position of the hexamer 5'-ACRCAG-3' in genomic DNA. N(6)-methylated adenine on the fifth position of 5'-ACRCAG-3' is found in the genome; there are 1906 sites in the genomic DNA. The protein is Adenine-specific methyltransferase PglX of Lacticaseibacillus casei (strain Zhang) (Lactobacillus casei).